The primary structure comprises 446 residues: Tubulin gamma chain (446 aa).

GTP is bound at residue 142 to 148 (AGGTGSG).

It belongs to the tubulin family. As to quaternary structure, interacts with mto1. Interacts with mto2.

It is found in the cytoplasm. The protein localises to the cytoskeleton. It localises to the microtubule organizing center. The protein resides in the spindle pole body. Its function is as follows. Tubulin is the major constituent of microtubules. The gamma chain is found at microtubule organizing centers (MTOC) such as the spindle poles or the centrosome, suggesting that it is involved in the minus-end nucleation of microtubule assembly. In Schizosaccharomyces pombe (strain 972 / ATCC 24843) (Fission yeast), this protein is Tubulin gamma chain.